The primary structure comprises 347 residues: uncharacterized protein (347 aa).

10 consecutive transmembrane segments (helical) span residues 6–26, 37–57, 90–110, 114–134, 140–160, 182–202, 217–237, 262–282, 289–309, and 317–337; these read GSAS…GFAT, FGWF…LLGA, FMLF…GALF, LGMS…IVMT, IFGV…IVVA, WLLS…AVLV, GALI…LSLS, LIYL…NLYG, SFLP…AYIT, and LIST…GALL.

The protein localises to the cell membrane. This is an uncharacterized protein from Bacillus subtilis (strain 168).